A 753-amino-acid polypeptide reads, in one-letter code: Metal regulatory transcription factor 1 (753 aa).

Glycine 2 is modified (N-acetylglycine). Position 5 is a phosphoserine (serine 5). A Nuclear localization signal motif is present at residues 133–138 (KRKEVK). 6 C2H2-type zinc fingers span residues 140 to 164 (YQCT…QKTH), 170 to 194 (FVCN…VRVH), 200 to 224 (FECD…QRLH), 229 to 253 (FNCE…IRTH), 259 to 283 (FRCD…VRTH), and 289 to 313 (FFCP…MKGH). Serine 305 carries the phosphoserine modification. Disordered regions lie at residues 308 to 328 (SHMK…QHNG), 395 to 466 (ESFN…ALLQ), and 648 to 715 (SRRK…LSAM). Polar residues predominate over residues 408 to 417 (PPSTGNSASL). Pro residues predominate over residues 655–666 (SPPPPEPSPQAP). The span at 679-698 (SSAPVPGSSSSTLPSSCEQS) shows a compositional bias: low complexity. Positions 700 to 712 (QAETPSDPQTETL) are enriched in polar residues.

It localises to the nucleus. Its subcellular location is the cytoplasm. Its function is as follows. Zinc-dependent transcriptional regulator of cellular adaption to conditions of exposure to heavy metals. Binds to metal responsive elements (MRE) in promoters and activates the transcription of metallothionein genes like metallothionein-2/MT2A. Also regulates the expression of metalloproteases in response to intracellular zinc and functions as a catabolic regulator of cartilages. The sequence is that of Metal regulatory transcription factor 1 (MTF1) from Homo sapiens (Human).